The chain runs to 416 residues: Protein LAZY 1 (416 aa).

A helical membrane pass occupies residues 63 to 83 (FTFGGSGLLTIGTLGIAAVAI). Positions 69 to 75 (GLLTIGT) match the IGT motif motif. 2 disordered regions span residues 266–306 (AAAA…GMPA) and 337–361 (KKSR…DGPL). Residues 270–282 (GVGGDRAGKGGGY) show a composition bias toward gly residues. The Nuclear localization signal motif lies at 278 to 295 (KGGGYKTMKKRKVKDEKG).

This sequence belongs to the LAZY family. In terms of tissue distribution, expressed specifically in the cells at the inner side of the vascular bundles of young leaf sheaths and peripheral cylinders of vascular bundles in the unelongated stems. Expressed in the leaf sheath pulvinus and the lamina joint.

Its subcellular location is the cell membrane. The protein localises to the nucleus. In terms of biological role, involved in the regulation of shoot gravitropism and tiller angle through negative regulation of basipetal polar auxin transport (PAT). Acts as positive regulator of lateral auxin transport. Promotes vertical shoot growth. LAZY1 and TAC1 play opposite functions in the regulation of tiller growth angle. This Oryza sativa subsp. japonica (Rice) protein is Protein LAZY 1.